The sequence spans 337 residues: ELAV-like protein 1-A (337 aa).

RRM domains are found at residues threonine 20–proline 109, alanine 117–asparagine 197, and tryptophan 255–serine 333.

Belongs to the RRM elav family. Interacts (via RRM3) with cirbp. Unable to form oligomers. Part of a ribonucleoprotein (RNP) complex, at least composed of elavl1/elrA and/or elavl2/elrB, igf2bp3/vg1RBP, ddx6/Xp54, ybx2/frgy2, lsm14b/rap55b and, in a subset of RNP complexes, stau1/staufen. As to expression, ubiquitously expressed in adults.

It is found in the cytoplasm. The protein resides in the cell cortex. In terms of biological role, RNA-binding protein that binds to the 3'-UTR region of mRNAs and increases their stability. Involved in embryonic stem cells (ESCs) differentiation: preferentially binds mRNAs that are not methylated by N6-methyladenosine (m6A), stabilizing them, promoting ESCs differentiation. Binds to poly-U elements and AU-rich elements (AREs) in the 3'-UTR of target mRNAs. May be involved in cytoplasmic mRNA polyadenylation. Acts cooperatively with cribp to stabilize AU-rich sequence (ARE)-containing mRNAs. May play a role during gastrulation. Required for the vegetal localization of vg1 mRNA. This Xenopus laevis (African clawed frog) protein is ELAV-like protein 1-A (elavl1-a).